A 156-amino-acid chain; its full sequence is Transcription factor E (156 aa).

An HTH TFE/IIEalpha-type domain is found at 1–72; sequence MYGEKAKKVL…LWILNIDQIE (72 aa).

This sequence belongs to the TFE family. Monomer. Interaction with RNA polymerase subunits RpoF and RpoE is necessary for Tfe stimulatory transcription activity. Able to interact with Tbp and RNA polymerase in the absence of DNA promoter. Interacts both with the preinitiation and elongation complexes.

Functionally, transcription factor that plays a role in the activation of archaeal genes transcribed by RNA polymerase. Facilitates transcription initiation by enhancing TATA-box recognition by TATA-box-binding protein (Tbp), and transcription factor B (Tfb) and RNA polymerase recruitment. Not absolutely required for transcription in vitro, but particularly important in cases where Tbp or Tfb function is not optimal. It dynamically alters the nucleic acid-binding properties of RNA polymerases by stabilizing the initiation complex and destabilizing elongation complexes. Seems to translocate with the RNA polymerase following initiation and acts by binding to the non template strand of the transcription bubble in elongation complexes. The sequence is that of Transcription factor E from Staphylothermus marinus (strain ATCC 43588 / DSM 3639 / JCM 9404 / F1).